We begin with the raw amino-acid sequence, 325 residues long: Tumor necrosis factor soluble receptor (325 aa).

The signal sequence occupies residues 1–16 (MLRLIALLVCVVYVYG). TNFR-Cys repeat units lie at residues 27-62 (KCGGHDYEKDGLCCASCHPGFYASRLCGPGSNTVCS), 63-104 (PCED…DRVC), 105-147 (NCST…TLCE), and 148-186 (KCPPHTYSDSLSPTERCGTSFNYISVGFNLYPVNETSCT). 6 disulfides stabilise this stretch: C28–C39, C40–C53, C43–C61, C64–C79, C82–C96, and C86–C104. N105 carries an N-linked (GlcNAc...) asparagine; by host glycan. 4 cysteine pairs are disulfide-bonded: C106–C120, C123–C146, C129–C149, and C164–C185. 3 N-linked (GlcNAc...) asparagine; by host glycosylation sites follow: N181, N205, and N238.

Binds to TNF-alpha and beta. Probably prevents TNF to reach cellular target and thereby deampening the potential antiviral effects of the cytokine. The chain is Tumor necrosis factor soluble receptor from Oryctolagus cuniculus (Rabbit).